A 235-amino-acid polypeptide reads, in one-letter code: Orotidine 5'-phosphate decarboxylase (235 aa).

Substrate contacts are provided by residues Asp10, Lys33, 60–69 (DLKMHDIPNT), Thr123, Arg185, Gln194, Gly214, and Arg215. The active-site Proton donor is the Lys62.

The protein belongs to the OMP decarboxylase family. Type 1 subfamily. As to quaternary structure, homodimer.

The enzyme catalyses orotidine 5'-phosphate + H(+) = UMP + CO2. Its pathway is pyrimidine metabolism; UMP biosynthesis via de novo pathway; UMP from orotate: step 2/2. Functionally, catalyzes the decarboxylation of orotidine 5'-monophosphate (OMP) to uridine 5'-monophosphate (UMP). This is Orotidine 5'-phosphate decarboxylase from Lactobacillus acidophilus (strain ATCC 700396 / NCK56 / N2 / NCFM).